We begin with the raw amino-acid sequence, 526 residues long: 1,4-beta-D-glucan cellobiohydrolase B (526 aa).

A signal peptide spans 1–23; it reads MASSFQLYKALLFFSSLLSAVQA. A catalytic region spans residues 24–458; the sequence is QKVGTQQAEV…SNIKFGPIGS (435 aa). The active-site Nucleophile is the Glu-235. The active-site Proton donor is Glu-240. N-linked (GlcNAc...) asparagine glycosylation is found at Asn-293 and Asn-400. A ser/Thr-rich linker region spans residues 459 to 490; the sequence is TFGNGGGSGPTTTVTTSTATSTTSSATSTATG. A disordered region spans residues 464–488; sequence GGSGPTTTVTTSTATSTTSSATSTA. A compositionally biased stretch (low complexity) spans 468-488; it reads PTTTVTTSTATSTTSSATSTA. The CBM1 domain occupies 490–526; that stretch reads GQAQHWEQCGGNGWTGPTVCASPWACTVVNSWYSQCL. 2 cysteine pairs are disulfide-bonded: Cys-498/Cys-515 and Cys-509/Cys-525.

Belongs to the glycosyl hydrolase 7 (cellulase C) family.

The protein localises to the secreted. The catalysed reaction is Hydrolysis of (1-&gt;4)-beta-D-glucosidic linkages in cellulose and cellotetraose, releasing cellobiose from the non-reducing ends of the chains.. In terms of biological role, the biological conversion of cellulose to glucose generally requires three types of hydrolytic enzymes: (1) Endoglucanases which cut internal beta-1,4-glucosidic bonds; (2) Exocellobiohydrolases that cut the disaccharide cellobiose from the non-reducing end of the cellulose polymer chain; (3) Beta-1,4-glucosidases which hydrolyze the cellobiose and other short cello-oligosaccharides to glucose. This chain is 1,4-beta-D-glucan cellobiohydrolase B (cbhB), found in Emericella nidulans (strain FGSC A4 / ATCC 38163 / CBS 112.46 / NRRL 194 / M139) (Aspergillus nidulans).